Reading from the N-terminus, the 203-residue chain is Small ribosomal subunit protein uS4c (203 aa).

In terms of domain architecture, S4 RNA-binding spans 89 to 152 (MRLDNILFRL…QSRTLIQNSL (64 aa)).

This sequence belongs to the universal ribosomal protein uS4 family. Part of the 30S ribosomal subunit. Contacts protein S5. The interaction surface between S4 and S5 is involved in control of translational fidelity.

The protein resides in the plastid. One of the primary rRNA binding proteins, it binds directly to 16S rRNA where it nucleates assembly of the body of the 30S subunit. Functionally, with S5 and S12 plays an important role in translational accuracy. This chain is Small ribosomal subunit protein uS4c (rps4), found in Orobanche minor (Small broomrape).